Consider the following 97-residue polypeptide: uncharacterized protein (97 aa).

This is an uncharacterized protein from Mycobacterium tuberculosis (strain CDC 1551 / Oshkosh).